Reading from the N-terminus, the 284-residue chain is L-ribulose-5-phosphate 3-epimerase UlaE (284 aa).

Belongs to the L-ribulose-5-phosphate 3-epimerase family.

The enzyme catalyses L-ribulose 5-phosphate = L-xylulose 5-phosphate. It functions in the pathway cofactor degradation; L-ascorbate degradation; D-xylulose 5-phosphate from L-ascorbate: step 3/4. Functionally, catalyzes the isomerization of L-xylulose-5-phosphate to L-ribulose-5-phosphate. Is involved in the anaerobic L-ascorbate utilization. In Salmonella heidelberg (strain SL476), this protein is L-ribulose-5-phosphate 3-epimerase UlaE.